A 194-amino-acid chain; its full sequence is Kallikrein-like enzyme LV-Ka (194 aa).

5 disulfides stabilise this stretch: Cys7–Cys99, Cys44–Cys192, Cys78–Cys146, Cys110–Cys125, and Cys136–Cys161. The region spanning 36-185 (LNQEDKFICP…YTEWIQSIIA (150 aa)) is the Peptidase S1 domain. The active-site Charge relay system is Ser140.

It belongs to the peptidase S1 family. Snake venom subfamily. Monomer. N-glycosylated. In terms of tissue distribution, expressed by the venom gland.

Its subcellular location is the secreted. With respect to regulation, completely inhibited by the serine protease inhibitors NPGB and PMSF, partially inhibited by benzamidines, and weakly or not inhibited by SBTI and EDTA. Functionally, shows kallikrein-like activity, releasing bradykinin from kininogen. Also activates plasminogen, which is also a plasma kallikrein activity. Is active upon the kallikrein substrates S-2266 and S-2302, suggesting a preference for Arg in P1 position. In vivo, lowers blood pressure after intravenous injection in rat. The polypeptide is Kallikrein-like enzyme LV-Ka (Lachesis muta muta (Bushmaster)).